Reading from the N-terminus, the 287-residue chain is Shikimate kinase (287 aa).

87–97 (PLASGLKSSSA) is a binding site for ATP.

The protein belongs to the GHMP kinase family. Archaeal shikimate kinase subfamily.

It localises to the cytoplasm. The enzyme catalyses shikimate + ATP = 3-phosphoshikimate + ADP + H(+). It participates in metabolic intermediate biosynthesis; chorismate biosynthesis; chorismate from D-erythrose 4-phosphate and phosphoenolpyruvate: step 5/7. The protein is Shikimate kinase of Methanococcoides burtonii (strain DSM 6242 / NBRC 107633 / OCM 468 / ACE-M).